Reading from the N-terminus, the 216-residue chain is Imidazoleglycerol-phosphate dehydratase (216 aa).

This sequence belongs to the imidazoleglycerol-phosphate dehydratase family.

The protein localises to the cytoplasm. The enzyme catalyses D-erythro-1-(imidazol-4-yl)glycerol 3-phosphate = 3-(imidazol-4-yl)-2-oxopropyl phosphate + H2O. The protein operates within amino-acid biosynthesis; L-histidine biosynthesis; L-histidine from 5-phospho-alpha-D-ribose 1-diphosphate: step 6/9. The polypeptide is Imidazoleglycerol-phosphate dehydratase (Nocardia farcinica (strain IFM 10152)).